Consider the following 596-residue polypeptide: Mitoguardin 2 (596 aa).

The next 2 helical transmembrane spans lie at 11–31 and 40–60; these read IMQA…STFG and LSPS…ALAL. Disordered regions lie at residues 67–158 and 576–596; these read RRGR…AAWE and ALPK…GQQD. Polar residues predominate over residues 110 to 123; the sequence is MSPSTRSNDTLSGV. Residues 124 to 140 are compositionally biased toward low complexity; it reads SSIAQSKHSSSSHSIAS. Composition is skewed to polar residues over residues 143-152 and 583-596; these read VPSSPNQSVN and QAES…GQQD.

Belongs to the mitoguardin family. Homodimer and heterodimer; forms heterodimers with miga1.

The protein resides in the mitochondrion outer membrane. Its function is as follows. Regulator of mitochondrial fusion: acts by forming homo- and heterodimers at the mitochondrial outer membrane and facilitating the formation of pld6/MitoPLD dimers. May act by regulating phospholipid metabolism via pld6/MitoPLD. The chain is Mitoguardin 2 from Danio rerio (Zebrafish).